The following is an 811-amino-acid chain: DEAD-box ATP-dependent RNA helicase 48 (811 aa).

Disordered regions lie at residues 1–32 (MGGG…ERGL) and 93–138 (DDGP…EPRL). The segment covering 15 to 29 (WQHKRMHEKLARHKE) has biased composition (basic residues). Basic and acidic residues-rich tracts occupy residues 95–104 (GPIHRADRPR) and 117–138 (GDRR…EPRL). Positions 286–333 (RNCDMKKERRALKSYEEENNDLAGSFRELREEIKNREVLGAERRRYES) form a coiled coil. Positions 342-370 (KRFEECGISPLTVKALTDAGYVQTTVVQE) match the Q motif motif. Positions 373–556 (LPMCLEGKDV…QLVLKRDHVF (184 aa)) constitute a Helicase ATP-binding domain. 386-393 (AKTGTGKS) lines the ATP pocket. The DEAD box motif lies at 504 to 507 (DEAD). The 171-residue stretch at 570 to 740 (KVEQLYLVMP…EMKRKVDGSI (171 aa)) folds into the Helicase C-terminal domain.

This sequence belongs to the DEAD box helicase family.

It catalyses the reaction ATP + H2O = ADP + phosphate + H(+). In Oryza sativa subsp. japonica (Rice), this protein is DEAD-box ATP-dependent RNA helicase 48.